A 78-amino-acid polypeptide reads, in one-letter code: Metallothionein-like protein type 2 (78 aa).

This sequence belongs to the metallothionein superfamily. Type 15 family.

Metallothioneins have a high content of cysteine residues that bind various heavy metals. This is Metallothionein-like protein type 2 from Actinidia deliciosa (Kiwi).